Here is a 489-residue protein sequence, read N- to C-terminus: Protein K15 (489 aa).

The first 26 residues, 1–26, serve as a signal peptide directing secretion; that stretch reads MKTLIFFWNLWLWALLVCFWCITLVC. The next 11 membrane-spanning stretches (helical) occupy residues 29 to 49, 63 to 83, 89 to 109, 121 to 141, 148 to 168, 175 to 195, 200 to 220, 237 to 257, 264 to 284, 296 to 316, and 324 to 344; these read TNSIDTMASLLVMCILFVSAI, WPSSWHLGIIACIVLKLWNLS, TYACLITTAILSLVTAFLTLI, HGILFTSTFAVLMTNMLVHMS, WIFFPISFTLSLPFLYAFATV, LVSSVSFICAGLVMGYPVSCC, CTATAAGLSLSSIYLGFTGII, FLLLQGGVLTTQTLTTELLAI, IKGHEILLLVCLIFLWCLYVW, MLHLIAAWSHTGGCVQLVMLL, and ILTMIICISTLFSTLQGLLVF.

As to quaternary structure, interacts with host LYN; this interaction modulates B-cells signaling. Interacts with host ITSN2.

It is found in the host cell membrane. It localises to the host Golgi apparatus. Its subcellular location is the host trans-Golgi network. Plays a crucial role for reactivation of the virus from latency, early viral gene expression and virus production. Modulates host signaling pathways including activation of MAP kinases c-JUN-N-terminal kinase (JNK), ERK2, and NF-kappa-B resulting in the activation of AP-1 and NFAT-dependent gene expression in B-lymphocytes. When expressed in epithelial cells, induces the expression of several inflammatory and angiogenic genes. Also interferes with B-lymphocytes signaling through interaction with host LYN kinase. The chain is Protein K15 (K15) from Human herpesvirus 8 type P (isolate GK18) (HHV-8).